A 640-amino-acid chain; its full sequence is Chaperone protein DnaK (640 aa).

Residue Thr201 is modified to Phosphothreonine; by autocatalysis. Low complexity predominate over residues Ala603–Lys621. The segment at Ala603–Asp625 is disordered.

This sequence belongs to the heat shock protein 70 family.

In terms of biological role, acts as a chaperone. This is Chaperone protein DnaK from Stenotrophomonas maltophilia (strain K279a).